A 518-amino-acid chain; its full sequence is Probable G-protein coupled receptor Mth-like 2 (518 aa).

The first 26 residues, 1–26, serve as a signal peptide directing secretion; that stretch reads MIASSKMLLSASILIYFLLNLQSSSA. Topologically, residues 27–220 are extracellular; that stretch reads EIADCSFYDT…CLILPSRTGQ (194 aa). Intrachain disulfides connect cysteine 31/cysteine 85, cysteine 87/cysteine 92, cysteine 96/cysteine 190, cysteine 97/cysteine 108, and cysteine 152/cysteine 211. Asparagine 47 carries an N-linked (GlcNAc...) asparagine glycan. N-linked (GlcNAc...) asparagine glycosylation is found at asparagine 111, asparagine 125, and asparagine 201. A helical membrane pass occupies residues 221-241; sequence TVVMITSLICLVLTIAVYLCV. Residues 242–250 lie on the Cytoplasmic side of the membrane; the sequence is KKLMNLEGK. Residues 251–271 traverse the membrane as a helical segment; it reads CFICYMMCLFFGYLFLLLDLW. Over 272–279 the chain is Extracellular; the sequence is ELSLDFCK. A helical transmembrane segment spans residues 280-300; it reads AAGFLGYFFVMAAFFWLSIIS. At 301–321 the chain is on the cytoplasmic side; sequence RHYWKCLTNPCASMNIRSERA. The helical transmembrane segment at 322–342 threads the bilayer; sequence FLLYSCFAWAMPLALTGVTYL. Residues 343–371 are Extracellular-facing; that stretch reads ADNVVNNEEWQPRVGDEGHCWIYTKSWSA. Residues 372 to 392 form a helical membrane-spanning segment; it reads MVYFYGPMVLLILFNITMFVL. Over 393–426 the chain is Cytoplasmic; that stretch reads TAKHIIDSKRTLRKIARNEGRIQKLNSDKQNYTQ. A helical transmembrane segment spans residues 427–447; it reads FLLLFTVMGMSWSFEIFSYLV. The Extracellular segment spans residues 448-455; that stretch reads QREKLWVN. A helical transmembrane segment spans residues 456-476; that stretch reads IFLVADYFNWSQGVIIFVLFI. The Cytoplasmic portion of the chain corresponds to 477 to 518; that stretch reads LRRKTLVLFKKQIFPKQRAFSRSATQSTIESISQTKRHFNMT.

Belongs to the G-protein coupled receptor 2 family. Mth subfamily.

Its subcellular location is the cell membrane. This chain is Probable G-protein coupled receptor Mth-like 2 (mthl2), found in Drosophila melanogaster (Fruit fly).